The primary structure comprises 594 residues: CRISPR-associated DNA-binding protein Cas12m (594 aa).

Residues 1–85 (MSRLEARTRY…EKVRQVMVFE (85 aa)) are recognition domain (REC1-N). Positions 86–153 (SETTKKIKEL…ERSFIFEARK (68 aa)) are recognition domain (REC2). A recognition domain (REC1-C) region spans residues 154–211 (QELAQLEKERWAVVKELGKGSGLYWCNLEDVVNSYDIGRKKAKAAGGEMRFHRWDGTG). The wedge domain (WED) stretch occupies residues 212 to 314 (KVTVRFQKGL…RYKLNLVLEI (103 aa)). Residues 315–329 (LGENTNRILPALEGT) are linker. The segment at 330–540 (AAIDLGWRTV…KNHVEFTYVP (211 aa)) is ruvC-I. Residues 541–575 (AENTTITCHKCGHKEKFDAAAQIIHTCSTCGELWD) form a target nucleic-acid binding (TNB) region. Zn(2+) is bound by residues Cys548, Cys551, Cys567, and Cys570. The ruvC-II stretch occupies residues 576 to 594 (QDYNAAKNLLAFSQKGGVK). A Mg(2+)-binding site is contributed by Asp577.

It belongs to the CRISPR-associated DNA-binding protein Cas12m family. Requires Mg(2+) as cofactor. Zn(2+) serves as cofactor.

CRISPR (clustered regularly interspaced short palindromic repeat), is an adaptive immune system that provides protection against mobile genetic elements (viruses, transposable elements and conjugative plasmids). CRISPR clusters contain sequences complementary to antecedent mobile elements and target invading nucleic acids. CRISPR clusters are transcribed and processed into CRISPR RNA (crRNA). Recognizes a short motif in the CRISPR repeat sequences (the 5' PAM or protospacer adjacent motif, 5'-C/TCN-3' in this organism) to help distinguish self versus nonself, as targets within the bacterial CRISPR locus do not have PAMs. Upon expression in E.coli as a CRISPR locus inhibits plasmid propagation when targeted to regions essential for plasmid propagation (replication origin but not a selectable marker), probably by inhibiting transcription. Cas12m-crRNA binds DNA in a PAM-dependent, crRNA-guided fashion. Upon expression in E.coli as a CRISPR region preferentially binds to its associated crRNA. Probably required for pre-crRNA processing to mature crRNA. This Thermanaerosceptrum fracticalcis protein is CRISPR-associated DNA-binding protein Cas12m.